The chain runs to 197 residues: FMN-dependent NADH:quinone oxidoreductase (197 aa).

Residue S10 participates in FMN binding.

This sequence belongs to the azoreductase type 1 family. Homodimer. Requires FMN as cofactor.

It carries out the reaction 2 a quinone + NADH + H(+) = 2 a 1,4-benzosemiquinone + NAD(+). The enzyme catalyses N,N-dimethyl-1,4-phenylenediamine + anthranilate + 2 NAD(+) = 2-(4-dimethylaminophenyl)diazenylbenzoate + 2 NADH + 2 H(+). Functionally, quinone reductase that provides resistance to thiol-specific stress caused by electrophilic quinones. Its function is as follows. Also exhibits azoreductase activity. Catalyzes the reductive cleavage of the azo bond in aromatic azo compounds to the corresponding amines. In Mycoplasma genitalium (strain ATCC 33530 / DSM 19775 / NCTC 10195 / G37) (Mycoplasmoides genitalium), this protein is FMN-dependent NADH:quinone oxidoreductase.